Reading from the N-terminus, the 210-residue chain is Large ribosomal subunit protein uL3 (210 aa).

Belongs to the universal ribosomal protein uL3 family. As to quaternary structure, part of the 50S ribosomal subunit. Forms a cluster with proteins L14 and L19.

One of the primary rRNA binding proteins, it binds directly near the 3'-end of the 23S rRNA, where it nucleates assembly of the 50S subunit. The polypeptide is Large ribosomal subunit protein uL3 (Caldicellulosiruptor saccharolyticus (strain ATCC 43494 / DSM 8903 / Tp8T 6331)).